Here is a 392-residue protein sequence, read N- to C-terminus: Queuine tRNA-ribosyltransferase (392 aa).

Catalysis depends on Asp93, which acts as the Proton acceptor. Substrate is bound by residues 93 to 97, Asp147, Gln189, and Gly216; that span reads DSGGY. Residues 247–253 form an RNA binding region; the sequence is GVGAPED. Asp266 serves as the catalytic Nucleophile. An RNA binding; important for wobble base 34 recognition region spans residues 271 to 275; that stretch reads TRVAR. Cys304, Cys306, Cys309, and His335 together coordinate Zn(2+).

This sequence belongs to the queuine tRNA-ribosyltransferase family. As to quaternary structure, homodimer. Within each dimer, one monomer is responsible for RNA recognition and catalysis, while the other monomer binds to the replacement base PreQ1. The cofactor is Zn(2+).

It catalyses the reaction 7-aminomethyl-7-carbaguanine + guanosine(34) in tRNA = 7-aminomethyl-7-carbaguanosine(34) in tRNA + guanine. It participates in tRNA modification; tRNA-queuosine biosynthesis. In terms of biological role, catalyzes the base-exchange of a guanine (G) residue with the queuine precursor 7-aminomethyl-7-deazaguanine (PreQ1) at position 34 (anticodon wobble position) in tRNAs with GU(N) anticodons (tRNA-Asp, -Asn, -His and -Tyr). Catalysis occurs through a double-displacement mechanism. The nucleophile active site attacks the C1' of nucleotide 34 to detach the guanine base from the RNA, forming a covalent enzyme-RNA intermediate. The proton acceptor active site deprotonates the incoming PreQ1, allowing a nucleophilic attack on the C1' of the ribose to form the product. After dissociation, two additional enzymatic reactions on the tRNA convert PreQ1 to queuine (Q), resulting in the hypermodified nucleoside queuosine (7-(((4,5-cis-dihydroxy-2-cyclopenten-1-yl)amino)methyl)-7-deazaguanosine). In Dehalococcoides mccartyi (strain CBDB1), this protein is Queuine tRNA-ribosyltransferase.